Here is a 329-residue protein sequence, read N- to C-terminus: GTP 3',8-cyclase (329 aa).

Residues 8 to 234 (AFARKYYYLR…QLRQRSDGPA (227 aa)) enclose the Radical SAM core domain. Arg-17 contacts GTP. Residues Cys-24 and Cys-28 each coordinate [4Fe-4S] cluster. Tyr-30 lines the S-adenosyl-L-methionine pocket. Cys-31 contacts [4Fe-4S] cluster. Arg-68 contributes to the GTP binding site. Residue Gly-72 participates in S-adenosyl-L-methionine binding. A GTP-binding site is contributed by Thr-99. S-adenosyl-L-methionine is bound at residue Ser-123. A GTP-binding site is contributed by Lys-160. Met-194 serves as a coordination point for S-adenosyl-L-methionine. [4Fe-4S] cluster-binding residues include Cys-257 and Cys-260. Residue 262-264 (RLR) participates in GTP binding. Cys-274 contacts [4Fe-4S] cluster.

It belongs to the radical SAM superfamily. MoaA family. As to quaternary structure, monomer and homodimer. The cofactor is [4Fe-4S] cluster.

The enzyme catalyses GTP + AH2 + S-adenosyl-L-methionine = (8S)-3',8-cyclo-7,8-dihydroguanosine 5'-triphosphate + 5'-deoxyadenosine + L-methionine + A + H(+). It participates in cofactor biosynthesis; molybdopterin biosynthesis. Catalyzes the cyclization of GTP to (8S)-3',8-cyclo-7,8-dihydroguanosine 5'-triphosphate. The protein is GTP 3',8-cyclase of Escherichia coli O17:K52:H18 (strain UMN026 / ExPEC).